Here is a 355-residue protein sequence, read N- to C-terminus: Sesquiterpene synthase MAJ_08936 (355 aa).

Residues Asp-91 and Asp-96 each contribute to the Mg(2+) site. The DDXXXD motif motif lies at 91 to 96; that stretch reads DDLFVD. Arg-184 is a substrate binding site. Mg(2+) contacts are provided by Asn-230, Ser-234, and Glu-238.

The protein belongs to the terpene synthase family. The cofactor is Mg(2+).

The catalysed reaction is (2E,6E)-farnesyl diphosphate + H2O = (+)-corvol ether B + diphosphate. It carries out the reaction (2E,6E)-farnesyl diphosphate + H2O = (+)-corvol ether A + diphosphate. Its function is as follows. Terpene synthase that catalyzes the conversion of (2E,6E)-farnesyl diphosphate (FPP) into sesquiterpenes which are important for fungi-environment interactions. Produces a mixture consisting of 8 sesquiterpenes including corvol ethers A and B, as well as traces of epizonarene, gamma-cadinene, delta-cadinene, alpha-cadinene, alpha-cadinol, and an unidentified sesquiterpene. The major product is corvol ether A. The polypeptide is Sesquiterpene synthase MAJ_08936 (Metarhizium majus (strain ARSEF 297)).